Here is a 490-residue protein sequence, read N- to C-terminus: MFSIINPSDDFWTKDKYIMLTIKGPMEWEAEIPGISTDFFCKFSNVSVPHFRDMHSPGAPDIKWITACTKMIDVILNYWNNKTAVPTPAKWYAQAENKAGRPSLILLIALDGIPSATIGKHTTEIRGVLIKDFFDGNAPKIDDWCTYAKTKKNGGGTQVFSLSYIPFALLQIIRPQFQWAWTNINELGDVCDEIHRKHIISHFNKKPNVKLMLFPKDGINGISLKSKFLGTIEWLSDLGIVTEDAWIRRDIRSYMQLLTLTHGDVLIHRALSIAKKRIRATRKAIDFIAHIDTDFQIYENPVYQLFCLQSFDPILAGTILYQWLSHRGGKKNTVSFIGPPGCGKSMLTGAILENIPLHGILHGSLNTKNLRAYGQVLVLWWKDISINFDNFNIIKSLLGGQKIIFPINENDHVQIGPCPIIATSCVDIRSMVHSNLHKINLSQRVYNFTFDKVIPRNFPVIQKDDINQFLFWARNRSINCFIDYTVPKIL.

A PV NS1-Nuc domain is found at 1–210 (MFSIINPSDD…SHFNKKPNVK (210 aa)).

The protein resides in the host nucleus. The chain is Protein U94 (U94) from Human herpesvirus 6A (strain Uganda-1102) (HHV-6 variant A).